Reading from the N-terminus, the 89-residue chain is Nitrogen regulatory protein (89 aa).

Residues 6-89 (TILTPGRSLV…ALLHLEAPID (84 aa)) enclose the PTS EIIA type-2 domain. His-68 serves as the catalytic Tele-phosphohistidine intermediate.

It is found in the cytoplasm. Functionally, seems to have a role in regulating nitrogen assimilation. This chain is Nitrogen regulatory protein (ptsN), found in Pseudomonas putida (Arthrobacter siderocapsulatus).